Consider the following 144-residue polypeptide: Large ribosomal subunit protein uL11 (144 aa).

The protein belongs to the universal ribosomal protein uL11 family. As to quaternary structure, part of the ribosomal stalk of the 50S ribosomal subunit. Interacts with L10 and the large rRNA to form the base of the stalk. L10 forms an elongated spine to which L12 dimers bind in a sequential fashion forming a multimeric L10(L12)X complex. In terms of processing, one or more lysine residues are methylated.

Functionally, forms part of the ribosomal stalk which helps the ribosome interact with GTP-bound translation factors. This chain is Large ribosomal subunit protein uL11, found in Acidiphilium cryptum (strain JF-5).